The chain runs to 896 residues: MKKLSTNQIRKIWLDFFISKNHYFLEPVSLIPVDDPSLLWINSGVATLKPYFDGRKTPPSPRLTNSQKAIRTNDIENVGVTARHHTMFEMLGNFSIGDYFKKEAIELAWELLTDKNYFDIDKNKLYITVFNEDIEAYNIWKDVIKIDEDHIFRLSKKTNFWDVGQGPCGPNTEIFYDRGEIWDPNKIGPRLISDDIENDRYIEVWNIVFSQFNNDGNNNYVELPRKNIDTGAGLERFASIFQNTPTNFETDIFYPTIKKVEQLTNNQFKYSIDNYFNPNKKQTRINTAFKVIADHIRATVFAISDGVFPGNKDRGYIIRRLIRRSCVFGNELGIKQAFLYKLVDSVIESMKEFYPYLVDKKSLVEQTIKDEEEKFLKTLSKGYDLLENIIKTKNTVSDKDALLLFESYGFPIEQTIEISELSNVTVDIEGFKKLLEQTKQATRNARKDLKAWDKQNELFTKLKVESEFTGWSEISRDNAKVIYMFTDQKQVESITDQEVFVILDKTPFYAEKGGQAADSGIIFNDQMKGFVIDVQQGPMHQNIHRIKVQDTLKLNDLINCRVDEEKRIYTMKNHSGTHMIHYALREVLGSSVMQSGSYNDENGLRMDFTYHRLPTNQELLKAQNLVLEKIKNKVDRQTYFCSLEESVKKHQALAFFTEKYDEIVRVIKFGDFSSELCGGTHVNNTSEIEDFIITGIESKGSGLYRIKCLTSFKTVNEYLNEQFKIYKDQAEIIIDKYNQNKDLLKNDQLENIYLEIKNITINKDNLILIKDLLDKLRDLNKDYDKKVNDLITANKLLKYKDLTPSLNKDNVNEIKLETTDLNIRDLKQLADDLRNKYNDLIVILLSSTNENNFIVVAVSQSLQNKYKAIDIFNNLEGYETKGGGNANLAQGKFVKK.

His-574, His-578, Cys-677, and His-681 together coordinate Zn(2+).

This sequence belongs to the class-II aminoacyl-tRNA synthetase family. It depends on Zn(2+) as a cofactor.

The protein resides in the cytoplasm. The enzyme catalyses tRNA(Ala) + L-alanine + ATP = L-alanyl-tRNA(Ala) + AMP + diphosphate. Its function is as follows. Catalyzes the attachment of alanine to tRNA(Ala) in a two-step reaction: alanine is first activated by ATP to form Ala-AMP and then transferred to the acceptor end of tRNA(Ala). Also edits incorrectly charged Ser-tRNA(Ala) and Gly-tRNA(Ala) via its editing domain. The chain is Alanine--tRNA ligase from Mycoplasma capricolum subsp. capricolum (strain California kid / ATCC 27343 / NCTC 10154).